Consider the following 638-residue polypeptide: Plasma kallikrein (638 aa).

A signal peptide spans 1–19; sequence MILFNRVGYFVSLFATVSC. 4 Apple domains span residues 21–104, 111–194, 201–284, and 292–375; these read CMTQ…LKQC, CHRD…LKSC, CPMD…LLTC, and CHSK…LRLC. Intrachain disulfides connect C21-C104, C47-C77, C51-C57, C111-C194, C137-C166, C141-C147, C201-C284, C227-C256, C231-C237, C292-C375, C318-C347, C322-C328, C340-C345, C383-C503, C419-C435, C517-C584, C548-C563, and C574-C602. Residue N127 is glycosylated (N-linked (GlcNAc...) asparagine). Residue N215 is glycosylated (N-linked (GlcNAc...) asparagine). The N-linked (GlcNAc...) asparagine glycan is linked to N308. The Peptidase S1 domain occupies 391–626; sequence IVGGTNASLG…YMDWILEKTQ (236 aa). An N-linked (GlcNAc...) asparagine glycan is attached at N396. Residues H434 and D483 each act as charge relay system in the active site. N494 is a glycosylation site (N-linked (GlcNAc...) asparagine). S578 acts as the Charge relay system in catalysis.

It belongs to the peptidase S1 family. Plasma kallikrein subfamily. Forms a heterodimer with SERPINA5. The zymogen is activated by factor XIIa, which cleaves the molecule into a light chain, which contains the active site, and a heavy chain, which associates with HMW kininogen. These chains are linked by one or more disulfide bonds.

It localises to the secreted. The enzyme catalyses Cleaves selectively Arg-|-Xaa and Lys-|-Xaa bonds, including Lys-|-Arg and Arg-|-Ser bonds in (human) kininogen to release bradykinin.. With respect to regulation, inhibited by SERPINA5. Functionally, the enzyme cleaves Lys-Arg and Arg-Ser bonds. It activates, in a reciprocal reaction, factor XII after its binding to a negatively charged surface. It also releases bradykinin from HMW kininogen and may also play a role in the renin-angiotensin system by converting prorenin into renin. This chain is Plasma kallikrein (Klkb1), found in Mus musculus (Mouse).